Here is a 194-residue protein sequence, read N- to C-terminus: Holliday junction branch migration complex subunit RuvA (194 aa).

The interval 1 to 64 is domain I; the sequence is MISRLTGKLV…EDAHLLFGFA (64 aa). A domain II region spans residues 65–143; the sequence is TAEERKTFRQ…AHAVTDGLFA (79 aa). The tract at residues 144–147 is flexible linker; sequence AAPA. The tract at residues 147–194 is domain III; it reads AADETEDIVGTLLALGYSEREAKAAVKGVPEGTDVGEGVRLALKNLLK.

The protein belongs to the RuvA family. In terms of assembly, homotetramer. Forms an RuvA(8)-RuvB(12)-Holliday junction (HJ) complex. HJ DNA is sandwiched between 2 RuvA tetramers; dsDNA enters through RuvA and exits via RuvB. An RuvB hexamer assembles on each DNA strand where it exits the tetramer. Each RuvB hexamer is contacted by two RuvA subunits (via domain III) on 2 adjacent RuvB subunits; this complex drives branch migration. In the full resolvosome a probable DNA-RuvA(4)-RuvB(12)-RuvC(2) complex forms which resolves the HJ.

It localises to the cytoplasm. In terms of biological role, the RuvA-RuvB-RuvC complex processes Holliday junction (HJ) DNA during genetic recombination and DNA repair, while the RuvA-RuvB complex plays an important role in the rescue of blocked DNA replication forks via replication fork reversal (RFR). RuvA specifically binds to HJ cruciform DNA, conferring on it an open structure. The RuvB hexamer acts as an ATP-dependent pump, pulling dsDNA into and through the RuvAB complex. HJ branch migration allows RuvC to scan DNA until it finds its consensus sequence, where it cleaves and resolves the cruciform DNA. This Neisseria meningitidis serogroup A / serotype 4A (strain DSM 15465 / Z2491) protein is Holliday junction branch migration complex subunit RuvA.